The chain runs to 1938 residues: Myosin-13 (1938 aa).

In terms of domain architecture, Myosin N-terminal SH3-like spans 33–82; it reads DSKKACFVADNKEMYVKGMIQTRENDKVIVKTLDDRMLTLNNDQVFPMNP. The region spanning 86–782 is the Myosin motor domain; that stretch reads DKIEDMAMMT…LLGLLEEMRD (697 aa). Residue K130 is modified to N6,N6,N6-trimethyllysine. ATP is bound at residue 179 to 186; the sequence is GESGAGKT. Actin-binding regions lie at residues 659–681 and 761–775; these read LNKL…IPNE and RFGN…GLLG. Residues 785 to 814 form the IQ domain; that stretch reads LVTLMTSTQAVCRGYLMRVEFKKMMERRDS. Positions 843–1938 form a coiled coil; the sequence is LLKSAEAEKE…RDVGSQKMEE (1096 aa). The disordered stretch occupies residues 1917–1938; the sequence is AESQVNKLRAKSRDVGSQKMEE. Over residues 1927–1938 the composition is skewed to basic and acidic residues; it reads KSRDVGSQKMEE.

The protein belongs to the TRAFAC class myosin-kinesin ATPase superfamily. Myosin family. As to quaternary structure, muscle myosin is a hexameric protein that consists of 2 heavy chain subunits (MHC), 2 alkali light chain subunits (MLC) and 2 regulatory light chain subunits (MLC-2). As to expression, specifically expressed in extraocular and laryngeal muscles.

The protein localises to the cytoplasm. It localises to the myofibril. Its function is as follows. Fast twitching myosin mediating the high-velocity and low-tension contractions of specific striated muscles. The sequence is that of Myosin-13 (MYH13) from Homo sapiens (Human).